Here is a 216-residue protein sequence, read N- to C-terminus: Flavin prenyltransferase UbiX (216 aa).

Residues 9–11, Ser-35, and Arg-144 contribute to the FMN site; that span reads GAS. Dimethylallyl phosphate contacts are provided by Tyr-174 and Arg-190.

This sequence belongs to the UbiX/PAD1 family.

It carries out the reaction dimethylallyl phosphate + FMNH2 = prenylated FMNH2 + phosphate. Functionally, flavin prenyltransferase that catalyzes the synthesis of the prenylated FMN cofactor (prenyl-FMN) for 4-hydroxy-3-polyprenylbenzoic acid decarboxylase UbiD. The prenyltransferase is metal-independent and links a dimethylallyl moiety from dimethylallyl monophosphate (DMAP) to the flavin N5 and C6 atoms of FMN. This is Flavin prenyltransferase UbiX from Streptomyces coelicolor (strain ATCC BAA-471 / A3(2) / M145).